The sequence spans 89 residues: Small ribosomal subunit protein uS15 (89 aa).

This sequence belongs to the universal ribosomal protein uS15 family. In terms of assembly, part of the 30S ribosomal subunit. Forms a bridge to the 50S subunit in the 70S ribosome, contacting the 23S rRNA.

Its function is as follows. One of the primary rRNA binding proteins, it binds directly to 16S rRNA where it helps nucleate assembly of the platform of the 30S subunit by binding and bridging several RNA helices of the 16S rRNA. Functionally, forms an intersubunit bridge (bridge B4) with the 23S rRNA of the 50S subunit in the ribosome. The protein is Small ribosomal subunit protein uS15 of Leuconostoc citreum (strain KM20).